A 104-amino-acid polypeptide reads, in one-letter code: DNA-directed RNA polymerase subunit Rpo13 (104 aa).

Disordered stretches follow at residues 1–34 (MVSG…EEFP) and 76–104 (EKRD…SVEG). Positions 7 to 31 (TEEEKEGTNDEEVSEEREVEETSEE) are enriched in acidic residues. Residue E32 coordinates DNA. Over residues 80-104 (SRRKAKKAASKKVKKTKKKEKSVEG) the composition is skewed to basic residues. Positions 81–104 (RRKAKKAASKKVKKTKKKEKSVEG) are required to bind DNA.

Belongs to the archaeal Rpo13 RNA polymerase subunit family. In terms of assembly, part of the 13-subunit RNA polymerase complex. Rpo1N and Rpo5 form a cleft which docks Rpo13. Forms predominantly dimers in solution, although monomers and trimers can also be seen. Found associated with RNAP but also as a homodimer pool in the cytoplasm in vivo.

The protein resides in the cytoplasm. It catalyses the reaction RNA(n) + a ribonucleoside 5'-triphosphate = RNA(n+1) + diphosphate. Its function is as follows. DNA-dependent RNA polymerase (RNAP) catalyzes the transcription of DNA into RNA using the four ribonucleoside triphosphates as substrates. A molten-globule protein, it binds dsDNA in the RNAP, in vitro binds dsDNA but not ssDNA. Its position in RNAP implies it functions in both transcription initiation and elongation. The protein is DNA-directed RNA polymerase subunit Rpo13 of Saccharolobus shibatae (strain ATCC 51178 / DSM 5389 / JCM 8931 / NBRC 15437 / B12) (Sulfolobus shibatae).